The following is a 107-amino-acid chain: uncharacterized protein (107 aa).

It belongs to the HesB/IscA family.

This is an uncharacterized protein from Azotobacter vinelandii.